Consider the following 174-residue polypeptide: Ribosome maturation factor RimM (174 aa).

The region spanning Pro96–Leu170 is the PRC barrel domain.

This sequence belongs to the RimM family. Binds ribosomal protein uS19.

The protein localises to the cytoplasm. In terms of biological role, an accessory protein needed during the final step in the assembly of 30S ribosomal subunit, possibly for assembly of the head region. Essential for efficient processing of 16S rRNA. May be needed both before and after RbfA during the maturation of 16S rRNA. It has affinity for free ribosomal 30S subunits but not for 70S ribosomes. This Nocardia farcinica (strain IFM 10152) protein is Ribosome maturation factor RimM.